A 643-amino-acid polypeptide reads, in one-letter code: Threonine--tRNA ligase (643 aa).

Positions 1 to 61 (MPIITLPDGS…SEDSSLEIIT (61 aa)) constitute a TGS domain. A catalytic region spans residues 243-534 (DHRRIGKALD…ITEEYAGFFP (292 aa)). Residues cysteine 334, histidine 385, and histidine 511 each coordinate Zn(2+).

It belongs to the class-II aminoacyl-tRNA synthetase family. Homodimer. The cofactor is Zn(2+).

Its subcellular location is the cytoplasm. It carries out the reaction tRNA(Thr) + L-threonine + ATP = L-threonyl-tRNA(Thr) + AMP + diphosphate + H(+). In terms of biological role, catalyzes the attachment of threonine to tRNA(Thr) in a two-step reaction: L-threonine is first activated by ATP to form Thr-AMP and then transferred to the acceptor end of tRNA(Thr). Also edits incorrectly charged L-seryl-tRNA(Thr). The polypeptide is Threonine--tRNA ligase (Actinobacillus pleuropneumoniae serotype 5b (strain L20)).